The chain runs to 232 residues: Ribonuclease 3 (232 aa).

One can recognise an RNase III domain in the interval 5–134 (ENLLFDRFGL…FLGALLLDKG (130 aa)). Residue Glu-47 participates in Mg(2+) binding. Residue Asp-51 is part of the active site. Mg(2+)-binding residues include Asp-120 and Glu-123. Glu-123 is a catalytic residue. The DRBM domain occupies 160–229 (DYKTKLQELL…AKNAFEKENH (70 aa)).

It belongs to the ribonuclease III family. As to quaternary structure, homodimer. Mg(2+) serves as cofactor.

Its subcellular location is the cytoplasm. It carries out the reaction Endonucleolytic cleavage to 5'-phosphomonoester.. In terms of biological role, digests double-stranded RNA. Involved in the processing of primary rRNA transcript to yield the immediate precursors to the large and small rRNAs (23S and 16S). Processes some mRNAs, and tRNAs when they are encoded in the rRNA operon. Processes pre-crRNA and tracrRNA of type II CRISPR loci if present in the organism. The sequence is that of Ribonuclease 3 from Streptococcus gordonii (strain Challis / ATCC 35105 / BCRC 15272 / CH1 / DL1 / V288).